A 386-amino-acid chain; its full sequence is MKIHEYQAKQLFRKYSIPVPEGLLCTNLQEVKTALKSLQLPIAVKAQIHAGGRGKGGGVKLGKTATEVVQYADDILGMSLVTAQTGPSGRTVSKILLEEGVSIARELYLSILVDRERACITIIACQDGGMNIEEVAASTPERIGKIHINPLIGPRSYHINQAREWLNIAQEQARAFSLFIHALYKLFLDYDCSMVEINPLIITEDNQLIALDAKVDTDSNALFRQRELQKMHDPAEDDPAEAEAAKFNLNYIKLSGNVGNMVNGAGLAMATMDIIKRAGAEPANFLDVGGSADAERIENGFRIILADTNVKAILINIFGGILRCDILAQGVVQAAAKVSLQVPVVIRMEGTNVKEGREILAKSGLSLINATDLNDAAEKISTLLTD.

In terms of domain architecture, ATP-grasp spans 9–243; that stretch reads KQLFRKYSIP…PAEDDPAEAE (235 aa). Residues Lys-45, 52–54, Glu-98, Val-101, and Glu-106 contribute to the ATP site; that span reads GRG. 2 residues coordinate Mg(2+): Asn-198 and Asp-212. Substrate-binding positions include Asn-263 and 320–322; that span reads GIL.

The protein belongs to the succinate/malate CoA ligase beta subunit family. As to quaternary structure, heterotetramer of two alpha and two beta subunits. Requires Mg(2+) as cofactor.

It carries out the reaction succinate + ATP + CoA = succinyl-CoA + ADP + phosphate. The enzyme catalyses GTP + succinate + CoA = succinyl-CoA + GDP + phosphate. Its pathway is carbohydrate metabolism; tricarboxylic acid cycle; succinate from succinyl-CoA (ligase route): step 1/1. Its function is as follows. Succinyl-CoA synthetase functions in the citric acid cycle (TCA), coupling the hydrolysis of succinyl-CoA to the synthesis of either ATP or GTP and thus represents the only step of substrate-level phosphorylation in the TCA. The beta subunit provides nucleotide specificity of the enzyme and binds the substrate succinate, while the binding sites for coenzyme A and phosphate are found in the alpha subunit. In Desulfotalea psychrophila (strain LSv54 / DSM 12343), this protein is Succinate--CoA ligase [ADP-forming] subunit beta.